The chain runs to 219 residues: Glutathione S-transferase (219 aa).

Residues 2–89 (SQPILGYWDI…YLGRKYKLNG (88 aa)) enclose the GST N-terminal domain. Glutathione contacts are provided by residues 8-9 (YW), 44-47 (RSEW), lysine 51, 60-61 (NL), and 73-74 (QT). A GST C-terminal domain is found at 91-207 (NDHEEIRISM…YIKKQQPKTF (117 aa)). Tyrosine 117 provides a ligand contact to substrate.

It belongs to the GST superfamily. Mu family. Homodimer.

It localises to the cytoplasm. The enzyme catalyses RX + glutathione = an S-substituted glutathione + a halide anion + H(+). The polypeptide is Glutathione S-transferase (Dermatophagoides pteronyssinus (European house dust mite)).